We begin with the raw amino-acid sequence, 295 residues long: Pyridoxal 5'-phosphate synthase subunit PdxS (295 aa).

Asp25 provides a ligand contact to D-ribose 5-phosphate. Lys82 (schiff-base intermediate with D-ribose 5-phosphate) is an active-site residue. Gly154 is a binding site for D-ribose 5-phosphate. D-glyceraldehyde 3-phosphate is bound at residue Arg166. D-ribose 5-phosphate contacts are provided by residues Gly215 and 236–237; that span reads GS.

This sequence belongs to the PdxS/SNZ family. In terms of assembly, in the presence of PdxT, forms a dodecamer of heterodimers.

It carries out the reaction aldehydo-D-ribose 5-phosphate + D-glyceraldehyde 3-phosphate + L-glutamine = pyridoxal 5'-phosphate + L-glutamate + phosphate + 3 H2O + H(+). It functions in the pathway cofactor biosynthesis; pyridoxal 5'-phosphate biosynthesis. In terms of biological role, catalyzes the formation of pyridoxal 5'-phosphate from ribose 5-phosphate (RBP), glyceraldehyde 3-phosphate (G3P) and ammonia. The ammonia is provided by the PdxT subunit. Can also use ribulose 5-phosphate and dihydroxyacetone phosphate as substrates, resulting from enzyme-catalyzed isomerization of RBP and G3P, respectively. The chain is Pyridoxal 5'-phosphate synthase subunit PdxS from Listeria innocua serovar 6a (strain ATCC BAA-680 / CLIP 11262).